Consider the following 601-residue polypeptide: Probable translation initiation factor IF-2 (601 aa).

In terms of domain architecture, tr-type G spans 10–227 (LRAPIVVVLG…VLAGLAQRYL (218 aa)). Residues 19–26 (GHVDAGKT) form a G1 region. 19–26 (GHVDAGKT) serves as a coordination point for GTP. Positions 44–48 (TMTQH) are G2. The interval 83-86 (DTPG) is G3. GTP-binding positions include 83–87 (DTPGH) and 137–140 (NKID). Residues 137–140 (NKID) form a G4 region. Positions 205-207 (SAV) are G5.

Belongs to the TRAFAC class translation factor GTPase superfamily. Classic translation factor GTPase family. IF-2 subfamily.

In terms of biological role, function in general translation initiation by promoting the binding of the formylmethionine-tRNA to ribosomes. Seems to function along with eIF-2. The chain is Probable translation initiation factor IF-2 from Thermofilum pendens (strain DSM 2475 / Hrk 5).